A 242-amino-acid polypeptide reads, in one-letter code: Probable transcriptional regulatory protein mhp472 (242 aa).

It belongs to the TACO1 family.

It is found in the cytoplasm. This is Probable transcriptional regulatory protein mhp472 from Mesomycoplasma hyopneumoniae (strain 232) (Mycoplasma hyopneumoniae).